A 553-amino-acid chain; its full sequence is Undecaprenyl phosphate-alpha-4-amino-4-deoxy-L-arabinose arabinosyl transferase (553 aa).

12 helical membrane-spanning segments follow: residues 8–28 (LLFS…RALW), 81–101 (FAVR…VYWL), 113–133 (LLSA…SYAV), 136–156 (PMVT…AQSA), 176–196 (LMTK…PWMI), 204–224 (LLLF…PWAI), 255–275 (APFW…VGLL), 289–309 (NSGS…FSLA), 313–333 (LPTY…HHGI), 351–371 (VAFG…WGLV), 384–404 (VLLG…CLVA), and 412–432 (AALC…DKVI).

This sequence belongs to the glycosyltransferase 83 family.

It localises to the cell inner membrane. The enzyme catalyses 4-amino-4-deoxy-alpha-L-arabinopyranosyl di-trans,octa-cis-undecaprenyl phosphate + lipid IVA = lipid IIA + di-trans,octa-cis-undecaprenyl phosphate.. The protein operates within lipopolysaccharide metabolism; 4-amino-4-deoxy-beta-L-arabinose-lipid A biosynthesis. Its function is as follows. Catalyzes the transfer of the L-Ara4N moiety of the glycolipid undecaprenyl phosphate-alpha-L-Ara4N to lipid A. The modified arabinose is attached to lipid A and is required for resistance to polymyxin and cationic antimicrobial peptides. This Erwinia tasmaniensis (strain DSM 17950 / CFBP 7177 / CIP 109463 / NCPPB 4357 / Et1/99) protein is Undecaprenyl phosphate-alpha-4-amino-4-deoxy-L-arabinose arabinosyl transferase.